Consider the following 478-residue polypeptide: Pyruvate kinase (478 aa).

Arg-35 provides a ligand contact to substrate. Residues Asn-37, Ser-39, and Asp-69 each coordinate K(+). ATP is bound at residue 37–40 (NMSH). ATP contacts are provided by Arg-76 and Lys-157. Glu-219 contacts Mg(2+). 3 residues coordinate substrate: Gly-242, Asp-243, and Thr-275. Asp-243 is a binding site for Mg(2+).

Belongs to the pyruvate kinase family. As to quaternary structure, homotetramer. The cofactor is Mg(2+). It depends on K(+) as a cofactor.

It carries out the reaction pyruvate + ATP = phosphoenolpyruvate + ADP + H(+). Its pathway is carbohydrate degradation; glycolysis; pyruvate from D-glyceraldehyde 3-phosphate: step 5/5. The chain is Pyruvate kinase (pyk) from Methylorubrum extorquens (strain ATCC 14718 / DSM 1338 / JCM 2805 / NCIMB 9133 / AM1) (Methylobacterium extorquens).